A 148-amino-acid chain; its full sequence is Large ribosomal subunit protein bL19 (148 aa).

It belongs to the bacterial ribosomal protein bL19 family.

This protein is located at the 30S-50S ribosomal subunit interface and may play a role in the structure and function of the aminoacyl-tRNA binding site. The sequence is that of Large ribosomal subunit protein bL19 from Beijerinckia indica subsp. indica (strain ATCC 9039 / DSM 1715 / NCIMB 8712).